Consider the following 177-residue polypeptide: Endoribonuclease YbeY (177 aa).

His114, His118, and His124 together coordinate Zn(2+). Residues 154–177 (SYPEAIPTNPAPRRQASSSAGHIE) are disordered. Polar residues predominate over residues 168-177 (QASSSAGHIE).

It belongs to the endoribonuclease YbeY family. The cofactor is Zn(2+).

Its subcellular location is the cytoplasm. Single strand-specific metallo-endoribonuclease involved in late-stage 70S ribosome quality control and in maturation of the 3' terminus of the 16S rRNA. This chain is Endoribonuclease YbeY, found in Cellvibrio japonicus (strain Ueda107) (Pseudomonas fluorescens subsp. cellulosa).